Here is a 256-residue protein sequence, read N- to C-terminus: UPF0644 protein PB2B4.06 (256 aa).

The helical transmembrane segment at 34-56 (GVVYAGVSGTCAAAGYMFGNFVM) threads the bilayer.

This sequence belongs to the UPF0644 family.

It localises to the mitochondrion membrane. This Schizosaccharomyces pombe (strain 972 / ATCC 24843) (Fission yeast) protein is UPF0644 protein PB2B4.06.